The chain runs to 910 residues: E3 ubiquitin-protein ligase HUL5 (910 aa).

The residue at position 1 (methionine 1) is an N-acetylmethionine. The segment at 1–25 (MLNFTGQTRRRNVNLGNRTRNSKKD) is disordered. Positions 810-910 (YGGYKEEDQT…INSGARFDLS (101 aa)) constitute an HECT domain. Cysteine 878 acts as the Glycyl thioester intermediate in catalysis.

Belongs to the UBE3C family. As to quaternary structure, interacts with 19S proteasomes.

It is found in the cytoplasm. The protein localises to the cytosol. Its subcellular location is the nucleus. The enzyme catalyses S-ubiquitinyl-[E2 ubiquitin-conjugating enzyme]-L-cysteine + [acceptor protein]-L-lysine = [E2 ubiquitin-conjugating enzyme]-L-cysteine + N(6)-ubiquitinyl-[acceptor protein]-L-lysine.. The protein operates within protein modification; protein ubiquitination. In terms of biological role, non-essential E3 ubiquitin-protein ligase that specifically catalyzes 'Lys-29'- and 'Lys-48'-linked polyubiquitin chains. Accepts ubiquitin from an E2 ubiquitin-conjugating enzyme in the form of a thioester and then directly transfers the ubiquitin to targeted substrates. Associates with the proteasome and promotes elongation of ubiquitin chains on substrates bound to the proteasome. Elongation of ubiquitin chains on substrates bound to the proteasome promotes proteasomal processivity. Also promotes ubiquitin elongation of 26S proteasome subunit RPN10. Involved in the stress response required to maintain cell fitness following heat-shock: acts by mediating ubiquitination of cytosolic misfolded proteins, leading to their subsequent degradation. The polypeptide is E3 ubiquitin-protein ligase HUL5 (Saccharomyces cerevisiae (strain ATCC 204508 / S288c) (Baker's yeast)).